The chain runs to 179 residues: Large ribosomal subunit protein uL5 (179 aa).

It belongs to the universal ribosomal protein uL5 family. In terms of assembly, part of the 50S ribosomal subunit; part of the 5S rRNA/L5/L18/L25 subcomplex. Contacts the 5S rRNA and the P site tRNA. Forms a bridge to the 30S subunit in the 70S ribosome.

This is one of the proteins that bind and probably mediate the attachment of the 5S RNA into the large ribosomal subunit, where it forms part of the central protuberance. In the 70S ribosome it contacts protein S13 of the 30S subunit (bridge B1b), connecting the 2 subunits; this bridge is implicated in subunit movement. Contacts the P site tRNA; the 5S rRNA and some of its associated proteins might help stabilize positioning of ribosome-bound tRNAs. The polypeptide is Large ribosomal subunit protein uL5 (Bacillus cereus (strain 03BB102)).